The sequence spans 246 residues: 5-oxoprolinase subunit A (246 aa).

It belongs to the LamB/PxpA family. In terms of assembly, forms a complex composed of PxpA, PxpB and PxpC.

It catalyses the reaction 5-oxo-L-proline + ATP + 2 H2O = L-glutamate + ADP + phosphate + H(+). In terms of biological role, catalyzes the cleavage of 5-oxoproline to form L-glutamate coupled to the hydrolysis of ATP to ADP and inorganic phosphate. The chain is 5-oxoprolinase subunit A from Vibrio cholerae serotype O1 (strain M66-2).